Reading from the N-terminus, the 425-residue chain is Enolase (425 aa).

Glutamine 161 serves as a coordination point for (2R)-2-phosphoglycerate. Glutamate 203 serves as the catalytic Proton donor. The Mg(2+) site is built by aspartate 240, glutamate 283, and aspartate 310. Residues lysine 335, arginine 364, serine 365, and lysine 386 each coordinate (2R)-2-phosphoglycerate. The Proton acceptor role is filled by lysine 335.

Belongs to the enolase family. In terms of assembly, component of the RNA degradosome, a multiprotein complex involved in RNA processing and mRNA degradation. It depends on Mg(2+) as a cofactor.

Its subcellular location is the cytoplasm. It is found in the secreted. The protein resides in the cell surface. The catalysed reaction is (2R)-2-phosphoglycerate = phosphoenolpyruvate + H2O. The protein operates within carbohydrate degradation; glycolysis; pyruvate from D-glyceraldehyde 3-phosphate: step 4/5. Catalyzes the reversible conversion of 2-phosphoglycerate (2-PG) into phosphoenolpyruvate (PEP). It is essential for the degradation of carbohydrates via glycolysis. The polypeptide is Enolase (Ruthia magnifica subsp. Calyptogena magnifica).